Consider the following 285-residue polypeptide: MVRIALPNKGRVYEPIMSLFEGAGLHVIEHSQRSLFAKTVDENITMLFARSRDIPGYVENGAADLGITGEDFIQEAGADVEVLLDLGMGKAELVLAVPEASAIERPEQLAGKKVATEFPEITKKYFATRGISVHVVEVCGATEITPHIGVADAIVDLTSTGTSLSMNRLKIIGRVLRTSQRLIASKASLAQDGRKISEITLALQSVIEARGKRYLMMNVPEGALEAVKKKLPGLAGPTVLKVEADSPMCAVHAVVPENEIYRVINDLKEVGARDILIVPIERIVR.

This sequence belongs to the ATP phosphoribosyltransferase family. Long subfamily. Mg(2+) is required as a cofactor.

It is found in the cytoplasm. It carries out the reaction 1-(5-phospho-beta-D-ribosyl)-ATP + diphosphate = 5-phospho-alpha-D-ribose 1-diphosphate + ATP. It functions in the pathway amino-acid biosynthesis; L-histidine biosynthesis; L-histidine from 5-phospho-alpha-D-ribose 1-diphosphate: step 1/9. Its activity is regulated as follows. Feedback inhibited by histidine. Its function is as follows. Catalyzes the condensation of ATP and 5-phosphoribose 1-diphosphate to form N'-(5'-phosphoribosyl)-ATP (PR-ATP). Has a crucial role in the pathway because the rate of histidine biosynthesis seems to be controlled primarily by regulation of HisG enzymatic activity. The polypeptide is ATP phosphoribosyltransferase (Methanocella arvoryzae (strain DSM 22066 / NBRC 105507 / MRE50)).